A 397-amino-acid chain; its full sequence is Ribosomal RNA large subunit methyltransferase I (397 aa).

The PUA domain maps to 2–81; the sequence is SAQVILQPSR…ESIDNGFFLR (80 aa).

Belongs to the methyltransferase superfamily. RlmI family.

Its subcellular location is the cytoplasm. The catalysed reaction is cytidine(1962) in 23S rRNA + S-adenosyl-L-methionine = 5-methylcytidine(1962) in 23S rRNA + S-adenosyl-L-homocysteine + H(+). Functionally, specifically methylates the cytosine at position 1962 (m5C1962) of 23S rRNA. The protein is Ribosomal RNA large subunit methyltransferase I of Alteromonas mediterranea (strain DSM 17117 / CIP 110805 / LMG 28347 / Deep ecotype).